A 203-amino-acid polypeptide reads, in one-letter code: Glycerol-3-phosphate acyltransferase (203 aa).

A run of 4 helical transmembrane segments spans residues L6–V26, A82–F102, A118–I138, and Y141–D161.

The protein belongs to the PlsY family. Probably interacts with PlsX.

It is found in the cell inner membrane. It catalyses the reaction an acyl phosphate + sn-glycerol 3-phosphate = a 1-acyl-sn-glycero-3-phosphate + phosphate. The protein operates within lipid metabolism; phospholipid metabolism. Its function is as follows. Catalyzes the transfer of an acyl group from acyl-phosphate (acyl-PO(4)) to glycerol-3-phosphate (G3P) to form lysophosphatidic acid (LPA). This enzyme utilizes acyl-phosphate as fatty acyl donor, but not acyl-CoA or acyl-ACP. This is Glycerol-3-phosphate acyltransferase from Shewanella oneidensis (strain ATCC 700550 / JCM 31522 / CIP 106686 / LMG 19005 / NCIMB 14063 / MR-1).